The sequence spans 173 residues: Telomerase RNA component interacting RNase (173 aa).

Basic and acidic residues predominate over residues 1–12; it reads MAARGRRAEPPG. The tract at residues 1-119 is disordered; the sequence is MAARGRRAEP…LSFVGKRRGG (119 aa). 2 stretches are compositionally biased toward low complexity: residues 14-23 and 43-52; these read EAPGPAGSGR and SGSSPVSSGV. Positions 64-79 are enriched in basic and acidic residues; the sequence is LFKRKMEEEQRQRQEE. A compositionally biased stretch (pro residues) spans 80–90; that stretch reads PPPGPQRPDPP. K143 bears the N6-acetyllysine mark.

In terms of assembly, part of the telomerase RNA 3' end complex which contains about 488 proteins.

Functionally, exoribonuclease that is part of the telomerase RNA 3' end processing complex and which has the ability to cleave all four unpaired RNA nucleotides from the 5' end or 3' end with higher efficiency for purine bases. In Mus musculus (Mouse), this protein is Telomerase RNA component interacting RNase.